We begin with the raw amino-acid sequence, 501 residues long: Pentatricopeptide repeat-containing protein At4g14190, chloroplastic (501 aa).

The N-terminal 88 residues, 1 to 88 (MENLTTAQFL…SGSCPLRLLQ (88 aa)), are a transit peptide targeting the chloroplast. PPR repeat units follow at residues 130-160 (SENNYERIIRFLCEEKSMSEAIRAFRSMIDD), 166-200 (SLEIYNSIIHSYADDGKFEEAMFYLNHMKENGLLP), 201-235 (ITETYDGLIEAYGKWKMYDEIVLCLKRMESDGCVR), 236-270 (DHVTYNLLIREFSRGGLLKRMEQMYQSLMSRKMTL), and 271-305 (EPSTLLSMLEAYAEFGLIEKMEETCNKIIRFGISL).

Belongs to the PPR family. P subfamily.

Its subcellular location is the plastid. The protein resides in the chloroplast. This Arabidopsis thaliana (Mouse-ear cress) protein is Pentatricopeptide repeat-containing protein At4g14190, chloroplastic.